Here is an 861-residue protein sequence, read N- to C-terminus: Putative glutamate--cysteine ligase 2-2 (861 aa).

Residues 1-372 (MSDARIVAVG…RDVPPAGAAA (372 aa)) are carboxylate-amine ligase. Residues 373–861 (ALGSAPAVSA…GSKDTWIPRR (489 aa)) form a unknown region.

In the N-terminal section; belongs to the glutamate--cysteine ligase type 2 family. YbdK subfamily.

It carries out the reaction L-cysteine + L-glutamate + ATP = gamma-L-glutamyl-L-cysteine + ADP + phosphate + H(+). ATP-dependent carboxylate-amine ligase which exhibits weak glutamate--cysteine ligase activity. This chain is Putative glutamate--cysteine ligase 2-2, found in Frankia casuarinae (strain DSM 45818 / CECT 9043 / HFP020203 / CcI3).